Here is a 232-residue protein sequence, read N- to C-terminus: Peptidyl-prolyl cis-trans isomerase CYP26-1 (232 aa).

In terms of domain architecture, PPIase cyclophilin-type spans 7–166 (FFDLTVDGKP…KPVVIADCGE (160 aa)). An N-linked (GlcNAc...) asparagine glycan is attached at Asn-108. The chain crosses the membrane as a helical span at residues 212–232 (YYLINIVVACMVLMCFWSWFV).

The protein belongs to the cyclophilin-type PPIase family. Expressed only in flowers.

Its subcellular location is the membrane. The enzyme catalyses [protein]-peptidylproline (omega=180) = [protein]-peptidylproline (omega=0). In terms of biological role, PPIases accelerate the folding of proteins. It catalyzes the cis-trans isomerization of proline imidic peptide bonds in oligopeptides. In Arabidopsis thaliana (Mouse-ear cress), this protein is Peptidyl-prolyl cis-trans isomerase CYP26-1 (CYP26-1).